The primary structure comprises 164 residues: Decoration protein (164 aa).

The interval 1–72 is binding to the capsid hexamer; sequence MIDYSGLRTI…AIPPAPPAPP (72 aa). The 94-residue stretch at 71 to 164 folds into the Ig-like domain; sequence PPLTLSKDLT…VTVNPTVPGG (94 aa).

In terms of assembly, interacts with the major capsid protein; each hexon binds a single copy of the decoration protein.

Its subcellular location is the virion. Functionally, decoration protein that binds asymmetrically to the center of each capsid protein hexamer after capsid expansion. Stabilizes the capsid and protects from DNA release. This chain is Decoration protein, found in Escherichia phage T5 (Enterobacteria phage T5).